Consider the following 83-residue polypeptide: Small ribosomal subunit protein bS16 (83 aa).

The protein belongs to the bacterial ribosomal protein bS16 family.

This is Small ribosomal subunit protein bS16 from Herminiimonas arsenicoxydans.